The following is a 191-amino-acid chain: Calcium-activated potassium channel subunit beta-1 (191 aa).

Residues 1-15 (MGKKLVMAQKRGETR) are Cytoplasmic-facing. Residues 16 to 36 (ALCLGVAMVMCAVIAYYILGT) form a helical membrane-spanning segment. The Extracellular segment spans residues 37–157 (TMLPLYQKSV…YRRLYGPQTL (121 aa)). N-linked (GlcNAc...) asparagine glycosylation is found at Asn80 and Asn142. A helical transmembrane segment spans residues 158 to 178 (LFSLFWPTFLLTGGLLIIAMV). The Cytoplasmic segment spans residues 179–191 (KINQSLSILAAQR).

This sequence belongs to the KCNMB (TC 8.A.14.1) family. KCNMB1 subfamily. Interacts with KCNMA1 tetramer. There are probably 4 molecules of KCMNB1 per KCNMA1 tetramer. N-glycosylated.

Its subcellular location is the membrane. Regulatory subunit of the calcium activated potassium KCNMA1 (maxiK) channel. Modulates the calcium sensitivity and gating kinetics of KCNMA1, thereby contributing to KCNMA1 channel diversity. Increases the apparent Ca(2+)/voltage sensitivity of the KCNMA1 channel. It also modifies KCNMA1 channel kinetics and alters its pharmacological properties. It slows down the activation and the deactivation kinetics of the channel. Acts as a negative regulator of smooth muscle contraction by enhancing the calcium sensitivity to KCNMA1. Its presence is also a requirement for internal binding of the KCNMA1 channel opener dehydrosoyasaponin I (DHS-1) triterpene glycoside and for external binding of the agonist hormone 17-beta-estradiol (E2). Increases the binding activity of charybdotoxin (CTX) toxin to KCNMA1 peptide blocker by increasing the CTX association rate and decreasing the dissociation rate. The protein is Calcium-activated potassium channel subunit beta-1 (KCNMB1) of Canis lupus familiaris (Dog).